Reading from the N-terminus, the 379-residue chain is Chaperone protein DnaJ (379 aa).

The 65-residue stretch at 5-69 (EFYDRLGVSK…QKRAAYDQYG (65 aa)) folds into the J domain. The CR-type zinc-finger motif lies at 135 to 217 (GAEKEVSYNR…CHGTGHEKKT (83 aa)). Cys148, Cys151, Cys165, Cys168, Cys191, Cys194, Cys205, and Cys208 together coordinate Zn(2+). CXXCXGXG motif repeat units follow at residues 148–155 (CHTCSGSG), 165–172 (CQKCHGSG), 191–198 (CDVCQGSG), and 205–212 (CPTCHGTG).

Belongs to the DnaJ family. As to quaternary structure, homodimer. The cofactor is Zn(2+).

It localises to the cytoplasm. Functionally, participates actively in the response to hyperosmotic and heat shock by preventing the aggregation of stress-denatured proteins and by disaggregating proteins, also in an autonomous, DnaK-independent fashion. Unfolded proteins bind initially to DnaJ; upon interaction with the DnaJ-bound protein, DnaK hydrolyzes its bound ATP, resulting in the formation of a stable complex. GrpE releases ADP from DnaK; ATP binding to DnaK triggers the release of the substrate protein, thus completing the reaction cycle. Several rounds of ATP-dependent interactions between DnaJ, DnaK and GrpE are required for fully efficient folding. Also involved, together with DnaK and GrpE, in the DNA replication of plasmids through activation of initiation proteins. This is Chaperone protein DnaJ from Streptococcus agalactiae serotype V (strain ATCC BAA-611 / 2603 V/R).